The following is a 470-amino-acid chain: Argininosuccinate lyase (470 aa).

This sequence belongs to the lyase 1 family. Argininosuccinate lyase subfamily.

The protein resides in the cytoplasm. The enzyme catalyses 2-(N(omega)-L-arginino)succinate = fumarate + L-arginine. It participates in amino-acid biosynthesis; L-arginine biosynthesis; L-arginine from L-ornithine and carbamoyl phosphate: step 3/3. The protein is Argininosuccinate lyase of Leptospira borgpetersenii serovar Hardjo-bovis (strain JB197).